Here is a 365-residue protein sequence, read N- to C-terminus: Probable tRNA pseudouridine synthase B (365 aa).

Catalysis depends on aspartate 43, which acts as the Nucleophile. Positions 209 to 285 constitute a PUA domain; it reads YPKIVVKRSA…DHIFLEADDG (77 aa). The segment at 300-365 is disordered; that stretch reads SGSGLHKDIQ…GKERHGRDHQ (66 aa). Basic and acidic residues-rich tracts occupy residues 304–318, 326–336, and 354–365; these read LHKD…KDTR, TGPEKTADRVW, and GGGKERHGRDHQ.

The protein belongs to the pseudouridine synthase TruB family. Type 2 subfamily.

It catalyses the reaction uridine(55) in tRNA = pseudouridine(55) in tRNA. Its function is as follows. Could be responsible for synthesis of pseudouridine from uracil-55 in the psi GC loop of transfer RNAs. In Thermoplasma acidophilum (strain ATCC 25905 / DSM 1728 / JCM 9062 / NBRC 15155 / AMRC-C165), this protein is Probable tRNA pseudouridine synthase B.